We begin with the raw amino-acid sequence, 249 residues long: 1-(5-phosphoribosyl)-5-[(5-phosphoribosylamino)methylideneamino] imidazole-4-carboxamide isomerase (249 aa).

Residue Asp8 is the Proton acceptor of the active site. Residue Asp129 is the Proton donor of the active site.

It belongs to the HisA/HisF family.

The protein localises to the cytoplasm. The catalysed reaction is 1-(5-phospho-beta-D-ribosyl)-5-[(5-phospho-beta-D-ribosylamino)methylideneamino]imidazole-4-carboxamide = 5-[(5-phospho-1-deoxy-D-ribulos-1-ylimino)methylamino]-1-(5-phospho-beta-D-ribosyl)imidazole-4-carboxamide. Its pathway is amino-acid biosynthesis; L-histidine biosynthesis; L-histidine from 5-phospho-alpha-D-ribose 1-diphosphate: step 4/9. The sequence is that of 1-(5-phosphoribosyl)-5-[(5-phosphoribosylamino)methylideneamino] imidazole-4-carboxamide isomerase from Rhizobium rhizogenes (strain K84 / ATCC BAA-868) (Agrobacterium radiobacter).